The sequence spans 92 residues: Large ribosomal subunit protein eL43 (92 aa).

The C4-type zinc-finger motif lies at 39 to 60 (CEFCGKYAVKRKAVGIWGCKAC).

This sequence belongs to the eukaryotic ribosomal protein eL43 family.

The protein is Large ribosomal subunit protein eL43 (RPL37A) of Gossypium hirsutum (Upland cotton).